The chain runs to 442 residues: tRNA modification GTPase MnmE (442 aa).

Residues Arg22, Glu79, and Lys119 each contribute to the (6S)-5-formyl-5,6,7,8-tetrahydrofolate site. The 151-residue stretch at 216–366 (GIKTCLVGAP…LLEKIKSIFA (151 aa)) folds into the TrmE-type G domain. K(+) is bound at residue Asn226. Residues 226-231 (NSGKSS), 245-251 (SEIPGTT), and 270-273 (DTAG) contribute to the GTP site. Mg(2+) is bound at residue Ser230. The K(+) site is built by Ser245, Ile247, and Thr250. Residue Thr251 coordinates Mg(2+). Lys442 provides a ligand contact to (6S)-5-formyl-5,6,7,8-tetrahydrofolate.

The protein belongs to the TRAFAC class TrmE-Era-EngA-EngB-Septin-like GTPase superfamily. TrmE GTPase family. As to quaternary structure, homodimer. Heterotetramer of two MnmE and two MnmG subunits. K(+) is required as a cofactor.

It is found in the cytoplasm. Its function is as follows. Exhibits a very high intrinsic GTPase hydrolysis rate. Involved in the addition of a carboxymethylaminomethyl (cmnm) group at the wobble position (U34) of certain tRNAs, forming tRNA-cmnm(5)s(2)U34. The sequence is that of tRNA modification GTPase MnmE from Mesomycoplasma hyopneumoniae (strain 232) (Mycoplasma hyopneumoniae).